The sequence spans 803 residues: Phenylalanine--tRNA ligase beta subunit (803 aa).

The tRNA-binding domain occupies 39-150 (AKVLAPFTIA…ADAPVGAAYA (112 aa)). A B5 domain is found at 400–475 (ADDKIIDFPL…RIVGVDKVPL (76 aa)). Asp-453, Asp-459, Glu-462, and Glu-463 together coordinate Mg(2+). An FDX-ACB domain is found at 709 to 802 (SAFHPVSRDF…VTKKTGGSLR (94 aa)).

Belongs to the phenylalanyl-tRNA synthetase beta subunit family. Type 1 subfamily. Tetramer of two alpha and two beta subunits. It depends on Mg(2+) as a cofactor.

The protein localises to the cytoplasm. It catalyses the reaction tRNA(Phe) + L-phenylalanine + ATP = L-phenylalanyl-tRNA(Phe) + AMP + diphosphate + H(+). The sequence is that of Phenylalanine--tRNA ligase beta subunit from Rhodopseudomonas palustris (strain ATCC BAA-98 / CGA009).